We begin with the raw amino-acid sequence, 323 residues long: Ribose import permease protein RbsC (323 aa).

7 helical membrane passes run Phe-21–Val-41, Ala-55–Gly-75, Ile-95–Val-115, Val-122–Tyr-142, Val-167–Ile-187, Ile-217–Thr-237, and Val-273–Leu-293.

The protein belongs to the binding-protein-dependent transport system permease family. AraH/RbsC subfamily. As to quaternary structure, the complex is composed of an ATP-binding protein (RbsA), two transmembrane proteins (RbsC) and a solute-binding protein (RbsB).

Its subcellular location is the cell inner membrane. In terms of biological role, part of the ABC transporter complex RbsABC involved in ribose import. Probably responsible for the translocation of the substrate across the membrane. The sequence is that of Ribose import permease protein RbsC (rbsC) from Haemophilus influenzae (strain ATCC 51907 / DSM 11121 / KW20 / Rd).